Reading from the N-terminus, the 544-residue chain is Chaperonin GroEL (544 aa).

Residues 29–32 (TLGP), 86–90 (DGTTT), Gly-413, 477–479 (DVL), and Asp-493 contribute to the ATP site.

The protein belongs to the chaperonin (HSP60) family. As to quaternary structure, forms a cylinder of 14 subunits composed of two heptameric rings stacked back-to-back. Interacts with the co-chaperonin GroES.

The protein localises to the cytoplasm. The catalysed reaction is ATP + H2O + a folded polypeptide = ADP + phosphate + an unfolded polypeptide.. Functionally, together with its co-chaperonin GroES, plays an essential role in assisting protein folding. The GroEL-GroES system forms a nano-cage that allows encapsulation of the non-native substrate proteins and provides a physical environment optimized to promote and accelerate protein folding. This chain is Chaperonin GroEL, found in Clostridium kluyveri (strain NBRC 12016).